The sequence spans 681 residues: Pseudohemocyanin-2 (681 aa).

The N-terminal stretch at 1–21 (VLLCSLVAATAAWPYFGGFQR) is a signal peptide. N-linked (GlcNAc...) asparagine glycans are attached at residues asparagine 98, asparagine 191, asparagine 228, and asparagine 624.

The protein belongs to the tyrosinase family. Hemocyanin subfamily. As to quaternary structure, hexamer. In terms of tissue distribution, strongly expressed in ovaries. Also expressed in heart. Not detected in hepatopancreas, gills, connective tissue or muscle.

Does not function as a hemocyanin. The sequence is that of Pseudohemocyanin-2 from Homarus americanus (American lobster).